Reading from the N-terminus, the 242-residue chain is Coat protein (242 aa).

The span at 1-16 (MGDQPRPPVPPAPGSN) shows a compositional bias: pro residues. Disordered regions lie at residues 1–41 (MGDQ…VANQ) and 219–242 (SNST…GPDA). Residues 219-232 (SNSTLLTKGASRST) show a composition bias toward polar residues.

Belongs to the potexvirus capsid protein family.

The protein localises to the virion. Required for genome encapsidation. Forms ribonucleoprotein complexes along with TGB1 helicase and viral RNA. The chain is Coat protein from Strawberry mild yellow edge-associated virus (SMYEaV).